An 89-amino-acid polypeptide reads, in one-letter code: Conotoxin Lt6.4 (89 aa).

Residues 1-22 (MKLTCVPIVAMLFLMACQLITA) form the signal peptide. Positions 23–50 (DYSREKHGYSAEKSSDKIQDSFYSKLTK) are excised as a propeptide. 3 disulfides stabilise this stretch: cysteine 52–cysteine 67, cysteine 59–cysteine 71, and cysteine 66–cysteine 80.

This sequence belongs to the conotoxin O1 superfamily. In terms of tissue distribution, expressed by the venom duct.

The protein localises to the secreted. This chain is Conotoxin Lt6.4, found in Conus litteratus (Lettered cone).